Reading from the N-terminus, the 128-residue chain is uncharacterized protein (128 aa).

The span at 1–11 (MDNKKKEENPS) shows a compositional bias: basic and acidic residues. Positions 1 to 40 (MDNKKKEENPSKSDTSISLPPSSTGEALQNYTESEWNASD) are disordered. Polar residues predominate over residues 12–37 (KSDTSISLPPSSTGEALQNYTESEWN).

This is an uncharacterized protein from Caenorhabditis elegans.